Reading from the N-terminus, the 518-residue chain is MIFVLLSAVLLGVFTYSVWIWSYFIRKGIKGPRGFPGIGMLIQTIDHENPPFLKYRDWTKQYGPVYGFTEGPQQTMIISEPEMVNEIFKKQFDNFYGRKLRPIIGDPEKDKRVNIFSTQGKRWKRLRTLSSPSFSNNSLRKVRNSVQECGTEILWNIEQKVRKNEDIDMLIVYQEYTLGVISRIALGQSESNMFKNPLLPKVQAIFNGSWHVFLITGIFPPLAGVFRKMSKMLPASFIPAFKIFDLIEVAVQARIDQRAKDEIKGVEPGEPQDFIDLFLDARVPDVKILSGEANEDFAKSSVVKINKELTFDEIIAQCFVFLAAGFDTTALSLSYATYLLATHPEIQTKLQEEVDRECPDPEIFFDHLSKLKYLECVMKETLRLYPLGTTANTRKCMRETTINGVNFDEGMNIQVDTWTLHHNPRIWGEDVEDFKPERWENGACEHLEHNGSYIPFGSGPRQCIGMRLAQMEQKILLAQILKEYSFRTTKNTQIPVKLVGKLTLSPESVIVKLEPRDS.

C463 provides a ligand contact to heme.

This sequence belongs to the cytochrome P450 family. It depends on heme as a cofactor.

Its function is as follows. Cytochromes P450 are a group of heme-thiolate monooxygenases. They oxidize a variety of structurally unrelated compounds, including steroids, fatty acids, and xenobiotics. This Caenorhabditis elegans protein is Putative cytochrome P450 CYP13A6 (cyp-13A6).